Reading from the N-terminus, the 262-residue chain is Putative BTB/POZ domain-containing protein L834 (262 aa).

A BTB domain is found at 16 to 86; that stretch reads FDVVVELTDE…FYKKNIQPCI (71 aa).

The protein belongs to the mimivirus BTB/WD family.

This is Putative BTB/POZ domain-containing protein L834 from Acanthamoeba polyphaga (Amoeba).